Here is a 495-residue protein sequence, read N- to C-terminus: 3-octaprenyl-4-hydroxybenzoate carboxy-lyase (495 aa).

Residue asparagine 172 coordinates Mn(2+). Prenylated FMN is bound by residues 175–177 (IYR), 189–191 (RWL), and 194–195 (RG). Mn(2+) is bound at residue glutamate 238. Residue aspartate 287 is the Proton donor of the active site.

It belongs to the UbiD family. In terms of assembly, homohexamer. The cofactor is prenylated FMN. Requires Mn(2+) as cofactor.

Its subcellular location is the cell membrane. The enzyme catalyses a 4-hydroxy-3-(all-trans-polyprenyl)benzoate + H(+) = a 2-(all-trans-polyprenyl)phenol + CO2. It participates in cofactor biosynthesis; ubiquinone biosynthesis. Its function is as follows. Catalyzes the decarboxylation of 3-octaprenyl-4-hydroxy benzoate to 2-octaprenylphenol, an intermediate step in ubiquinone biosynthesis. This Yersinia enterocolitica serotype O:8 / biotype 1B (strain NCTC 13174 / 8081) protein is 3-octaprenyl-4-hydroxybenzoate carboxy-lyase.